The primary structure comprises 423 residues: 58 kDa phosphoprotein (423 aa).

Residues 46–60 (KMGYEKMKSEDSTEE) are compositionally biased toward basic and acidic residues. A disordered region spans residues 46-82 (KMGYEKMKSEDSTEEKSDEEEEDEEEEEEEEEDDDPE). Positions 61–82 (KSDEEEEDEEEEEEEEEDDDPE) are enriched in acidic residues. 3 TPR repeats span residues 113-146 (ICKLKEEAVDLVENKKYEEALEKYNKIISFGNPS), 147-180 (AMIYTKRASILLNLKRPKACIRDCTEALNLNVDS), and 181-214 (ANAYKIRAKAYRYLGKWEFAHADMEQGQKIDYDE). A disordered region spans residues 260 to 301 (KKKAEKMYKENNKRENYDSDSSDSSYSEPDFSGDFPGGMPGG). Residues 264–276 (EKMYKENNKRENY) show a composition bias toward basic and acidic residues. Residues 292-362 (GDFPGGMPGG…GMPGMPGGMP (71 aa)) are 19 X 3-4 AA approximate repeats. Residues 361–423 (MPDLNSPEMK…GGMMGEKPKP (63 aa)) enclose the STI1 domain.

The protein resides in the cytoplasm. Functionally, may play a role in protein folding or protein-protein interactions. May act as a co-chaperone. This Plasmodium berghei protein is 58 kDa phosphoprotein.